We begin with the raw amino-acid sequence, 218 residues long: Superoxide dismutase [Mn], mitochondrial (218 aa).

Mn(2+) is bound by residues His27, His84, Asp174, and His178.

It belongs to the iron/manganese superoxide dismutase family. In terms of assembly, homotetramer. It depends on Mn(2+) as a cofactor.

It localises to the mitochondrion matrix. The enzyme catalyses 2 superoxide + 2 H(+) = H2O2 + O2. Destroys superoxide anion radicals which are normally produced within the cells and which are toxic to biological systems. The chain is Superoxide dismutase [Mn], mitochondrial (SODA) from Chlamydomonas reinhardtii (Chlamydomonas smithii).